Reading from the N-terminus, the 157-residue chain is Putative pre-16S rRNA nuclease (157 aa).

This sequence belongs to the YqgF nuclease family.

It is found in the cytoplasm. Functionally, could be a nuclease involved in processing of the 5'-end of pre-16S rRNA. This is Putative pre-16S rRNA nuclease from Parasynechococcus marenigrum (strain WH8102).